The following is a 438-amino-acid chain: Gamma-glutamyl phosphate reductase (438 aa).

The disordered stretch occupies residues 1 to 21; it reads MTAQTSSDVTDQKTDLTRESE. The segment covering 10 to 21 has biased composition (basic and acidic residues); sequence TDQKTDLTRESE.

Belongs to the gamma-glutamyl phosphate reductase family.

The protein resides in the cytoplasm. The enzyme catalyses L-glutamate 5-semialdehyde + phosphate + NADP(+) = L-glutamyl 5-phosphate + NADPH + H(+). It functions in the pathway amino-acid biosynthesis; L-proline biosynthesis; L-glutamate 5-semialdehyde from L-glutamate: step 2/2. Functionally, catalyzes the NADPH-dependent reduction of L-glutamate 5-phosphate into L-glutamate 5-semialdehyde and phosphate. The product spontaneously undergoes cyclization to form 1-pyrroline-5-carboxylate. The sequence is that of Gamma-glutamyl phosphate reductase from Corynebacterium efficiens (strain DSM 44549 / YS-314 / AJ 12310 / JCM 11189 / NBRC 100395).